The following is a 220-amino-acid chain: Putative glutathione S-transferase C1183.02 (220 aa).

The GST N-terminal domain maps to 2–81 (FLGTLYSFKT…YFYEKGKHND (80 aa)). Residues 89–216 (NEVEEAEMLK…FPLELPLTVT (128 aa)) enclose the GST C-terminal domain.

It belongs to the GST superfamily.

It is found in the cytoplasm. The enzyme catalyses RX + glutathione = an S-substituted glutathione + a halide anion + H(+). In terms of biological role, involved in the oxidative stress response and detoxification. The protein is Putative glutathione S-transferase C1183.02 of Schizosaccharomyces pombe (strain 972 / ATCC 24843) (Fission yeast).